Consider the following 158-residue polypeptide: Cyclic pyranopterin monophosphate synthase (158 aa).

Substrate-binding positions include 75–77 (LCH) and 113–114 (ME). Residue Asp-128 is part of the active site.

The protein belongs to the MoaC family. Homohexamer; trimer of dimers.

The catalysed reaction is (8S)-3',8-cyclo-7,8-dihydroguanosine 5'-triphosphate = cyclic pyranopterin phosphate + diphosphate. It functions in the pathway cofactor biosynthesis; molybdopterin biosynthesis. Catalyzes the conversion of (8S)-3',8-cyclo-7,8-dihydroguanosine 5'-triphosphate to cyclic pyranopterin monophosphate (cPMP). This is Cyclic pyranopterin monophosphate synthase from Acidiphilium cryptum (strain JF-5).